Consider the following 268-residue polypeptide: Putative carbamate hydrolase RutD (268 aa).

In terms of domain architecture, AB hydrolase-1 spans 15-119; that stretch reads PVMVMIAGLG…VIVNGWLSLS (105 aa).

It belongs to the AB hydrolase superfamily. Hydrolase RutD family.

The enzyme catalyses carbamate + 2 H(+) = NH4(+) + CO2. In terms of biological role, involved in pyrimidine catabolism. May facilitate the hydrolysis of carbamate, a reaction that can also occur spontaneously. This chain is Putative carbamate hydrolase RutD, found in Cronobacter sakazakii (strain ATCC BAA-894) (Enterobacter sakazakii).